Here is a 1774-residue protein sequence, read N- to C-terminus: Kinesin-like protein KIF20B (1774 aa).

Positions 58 to 477 (YLQVCLRIRP…LKFSTTAQRV (420 aa)) constitute a Kinesin motor domain. 152–159 (GLTNSGKT) contacts ATP. Ser-486 bears the Phosphoserine mark. Coiled coils occupy residues 525-601 (EDVL…KIRE) and 705-747 (QEAI…LVQA). Residues 538–555 (EENEETQNMETELTDEDS) are compositionally biased toward acidic residues. Disordered stretches follow at residues 538–557 (EENEETQNMETELTDEDSDK) and 740–799 (ESNS…PPAK). Residues 741 to 778 (SNSLVQALKTSSKVDTSLTSNKSTCNETSEMPKNSRAQ) are compositionally biased toward polar residues. Basic and acidic residues predominate over residues 779–788 (THSERKRLNE). Residues 824–946 (SEVVEGNRVL…QMQTKIDELR (123 aa)) are a coiled coil. Phosphoserine is present on Ser-950. The segment at 1002–1059 (ENSFHASIEAIWEECKEIVKASSKKSHQIQGLEEQIEKLQVEVKGYREENSDLRAQES) is necessary and sufficient for interaction with SHTN1. The stretch at 1021 to 1507 (KASSKKSHQI…DEEIQELRKA (487 aa)) forms a coiled coil. A phosphoserine mark is found at Ser-1107 and Ser-1542. Residues 1514–1774 (TENQTMNPKP…KRRLRTRTAK (261 aa)) form an interaction with PIN1 region. Residue Thr-1598 is modified to Phosphothreonine; by CDK1. Ser-1612 is subject to Phosphoserine. Residues 1625 to 1663 (KKNSTPRSNVKFPVSEHRNSPVKKEQKVSVGPSSKKTYS) are disordered. The span at 1638–1651 (VSEHRNSPVKKEQK) shows a compositional bias: basic and acidic residues. Ser-1669 and Ser-1694 each carry phosphoserine.

Belongs to the TRAFAC class myosin-kinesin ATPase superfamily. Kinesin family. Oligomerizes (via kinesin motor domain). Associates with microtubules. Interacts (via C-terminal globular tail region) with PIN1 (via WW domain). Interacts with PRC1. Interacts with SHTN1 (via N-terminus); the interaction is direct and promotes the association of SHTN1 to microtubules in primary neurons. Associates with microtubules. Post-translationally, phosphorylated during mitosis by CDK1. In terms of tissue distribution, expressed in the brain (at protein level).

It localises to the nucleus. It is found in the cytoplasm. The protein localises to the cytoskeleton. Its subcellular location is the microtubule organizing center. The protein resides in the centrosome. It localises to the nucleolus. It is found in the nucleoplasm. The protein localises to the spindle. Its subcellular location is the spindle pole. The protein resides in the midbody. It localises to the cell projection. It is found in the axon. The protein localises to the growth cone. Its function is as follows. Plus-end-directed motor enzyme that is required for completion of cytokinesis. Required for proper midbody organization and abscission in polarized cortical stem cells. Plays a role in the regulation of neuronal polarization by mediating the transport of specific cargos. Participates in the mobilization of SHTN1 and in the accumulation of PIP3 in the growth cone of primary hippocampal neurons in a tubulin and actin-dependent manner. In the developing telencephalon, cooperates with SHTN1 to promote both the transition from the multipolar to the bipolar stage and the radial migration of cortical neurons from the ventricular zone toward the superficial layer of the neocortex. Involved in cerebral cortex growth. Acts as an oncogene for promoting bladder cancer cells proliferation, apoptosis inhibition and carcinogenic progression. This Mus musculus (Mouse) protein is Kinesin-like protein KIF20B.